Consider the following 374-residue polypeptide: MLVIPPGLSEEEEALQKKFNKLKKKKKALLALKKQSSSSTASQGGVKRSLSEQPVVDTATATEQAKQLVKSGAISAIKAETKNSGFKRSRTLEGKLKDPEKGPVPTFQPFQRSVSADDDLQESSRRPQRKSLYESFVSSSDRLRELGPDGEEAEGPGAGDGPPRSFDWGYEERGGARSSASPPRSRSRDRSRERNRDRDRDRDRERDRERDRDRDRDRERDRDRDRDRDRDRERDREGPFRRSDSFPERRAPRKGNTLYVYGEDMTPTLLRGAFSPFGNIIDLSMDPPRNCAFVTYEKMESADQAVAELNGTQVESVQLKVSIARKQPMLDAATGKSVWGSLAVQNSPKGCHRDKRTQIVYSDDVYKENLVDGF.

The stretch at 7–36 (GLSEEEEALQKKFNKLKKKKKALLALKKQS) forms a coiled coil. Residues 30–43 (LALKKQSSSSTASQ) show a composition bias toward low complexity. The tract at residues 30–58 (LALKKQSSSSTASQGGVKRSLSEQPVVDT) is disordered. Ser-51 bears the Phosphoserine mark. Residue Lys-78 forms a Glycyl lysine isopeptide (Lys-Gly) (interchain with G-Cter in SUMO1); alternate linkage. Residue Lys-78 forms a Glycyl lysine isopeptide (Lys-Gly) (interchain with G-Cter in SUMO2); alternate linkage. The segment at 79 to 252 (AETKNSGFKR…SDSFPERRAP (174 aa)) is disordered. A Glycyl lysine isopeptide (Lys-Gly) (interchain with G-Cter in SUMO2) cross-link involves residue Lys-82. Over residues 90–101 (RTLEGKLKDPEK) the composition is skewed to basic and acidic residues. Phosphoserine occurs at positions 113 and 115. Position 122 is a polyADP-ribosyl glutamic acid (Glu-122). Phosphoserine occurs at positions 131 and 139. Glu-151 is subject to PolyADP-ribosyl glutamic acid. Ser-165 carries the post-translational modification Phosphoserine. PolyADP-ribosyl glutamic acid is present on Glu-172. Residues Ser-179, Ser-181, Ser-185, and Ser-187 each carry the phosphoserine modification. 27 repeat units span residues 184–185 (RS), 186–187 (RS), 188–189 (RD), 190–191 (RS), 192–193 (RE), 194–195 (RN), 196–197 (RD), 198–199 (RD), 200–201 (RD), 202–203 (RD), 204–205 (RE), 206–207 (RD), 208–209 (RE), 210–211 (RD), 212–213 (RD), 214–215 (RD), 216–217 (RD), 218–219 (RE), 220–221 (RD), 222–223 (RD), 224–225 (RD), 226–227 (RD), 228–229 (RD), 230–231 (RD), 232–233 (RE), 234–235 (RD), and 236–237 (RE). Residues 184-237 (RSRSRDRSRERNRDRDRDRDRERDRERDRDRDRDRERDRDRDRDRDRDRERDRE) are 27 X 2 AA approximate tandem repeats of R-[DSNE]. A compositionally biased stretch (basic and acidic residues) spans 186 to 250 (RSRDRSRERN…RRSDSFPERR (65 aa)). At Ser-191 the chain carries Phosphoserine. 2 positions are modified to phosphoserine: Ser-243 and Ser-245. In terms of domain architecture, RRM spans 256-326 (NTLYVYGEDM…VQLKVSIARK (71 aa)). 2 positions are modified to phosphothreonine: Thr-266 and Thr-268. Residues Ser-275 and Ser-347 each carry the phosphoserine modification. Glu-368 carries the post-translational modification PolyADP-ribosyl glutamic acid.

Belongs to the RRM NELF-E family. In terms of assembly, the NELF complex is composed of NELFA, NELFB, NELFCD and NELFE. Interacts with NELFB. Post-translationally, phosphorylated by the P-TEFb complex at sites next to its RNA recognition motif, promoting its release from chromatin. In terms of processing, sumoylated. Poly-ADP-ribosylated by PARP1, thereby preventing RNA-binding and relieving transcription pausing.

The protein localises to the nucleus. The protein resides in the chromosome. In terms of biological role, essential component of the NELF complex, a complex that negatively regulates the elongation of transcription by RNA polymerase II. The NELF complex, which acts via an association with the DSIF complex and causes transcriptional pausing, is counteracted by the P-TEFb kinase complex. Provides the strongest RNA binding activity of the NELF complex and may initially recruit the NELF complex to RNA. This chain is Negative elongation factor E (NELFE), found in Bos taurus (Bovine).